Consider the following 117-residue polypeptide: Large ribosomal subunit protein bL19 (117 aa).

It belongs to the bacterial ribosomal protein bL19 family.

Functionally, this protein is located at the 30S-50S ribosomal subunit interface and may play a role in the structure and function of the aminoacyl-tRNA binding site. The protein is Large ribosomal subunit protein bL19 of Desulfosudis oleivorans (strain DSM 6200 / JCM 39069 / Hxd3) (Desulfococcus oleovorans).